Consider the following 388-residue polypeptide: Succinate--CoA ligase [ADP-forming] subunit beta (388 aa).

Residues 9–244 (KQLFAEYGLP…PSQEDEREAH (236 aa)) form the ATP-grasp domain. ATP contacts are provided by residues Lys-46, 53 to 55 (GRG), Glu-99, Thr-102, and Glu-107. Mg(2+)-binding residues include Asn-199 and Asp-213. Substrate contacts are provided by residues Asn-264 and 321-323 (GIV).

Belongs to the succinate/malate CoA ligase beta subunit family. In terms of assembly, heterotetramer of two alpha and two beta subunits. The cofactor is Mg(2+).

It catalyses the reaction succinate + ATP + CoA = succinyl-CoA + ADP + phosphate. It carries out the reaction GTP + succinate + CoA = succinyl-CoA + GDP + phosphate. Its pathway is carbohydrate metabolism; tricarboxylic acid cycle; succinate from succinyl-CoA (ligase route): step 1/1. In terms of biological role, succinyl-CoA synthetase functions in the citric acid cycle (TCA), coupling the hydrolysis of succinyl-CoA to the synthesis of either ATP or GTP and thus represents the only step of substrate-level phosphorylation in the TCA. The beta subunit provides nucleotide specificity of the enzyme and binds the substrate succinate, while the binding sites for coenzyme A and phosphate are found in the alpha subunit. The sequence is that of Succinate--CoA ligase [ADP-forming] subunit beta from Marinomonas sp. (strain MWYL1).